A 99-amino-acid chain; its full sequence is Ubiquitin-related modifier 1 (99 aa).

Glycine 99 is modified (1-thioglycine). A Glycyl lysine isopeptide (Gly-Lys) (interchain with K-? in acceptor proteins) cross-link involves residue glycine 99.

The protein belongs to the URM1 family. In terms of processing, C-terminal thiocarboxylation occurs in 2 steps, it is first acyl-adenylated (-COAMP) via the hesA/moeB/thiF part of UBA4, then thiocarboxylated (-COSH) via the rhodanese domain of UBA4.

It localises to the cytoplasm. Its pathway is tRNA modification; 5-methoxycarbonylmethyl-2-thiouridine-tRNA biosynthesis. Acts as a sulfur carrier required for 2-thiolation of mcm(5)S(2)U at tRNA wobble positions of cytosolic tRNA(Lys), tRNA(Glu) and tRNA(Gln). Serves as sulfur donor in tRNA 2-thiolation reaction by being thiocarboxylated (-COSH) at its C-terminus by the MOCS3 homolog UBA4. The sulfur is then transferred to tRNA to form 2-thiolation of mcm(5)S(2)U. Prior mcm(5) tRNA modification by the elongator complex is required for 2-thiolation. Also acts as a ubiquitin-like protein (UBL) that is covalently conjugated via an isopeptide bond to lysine residues of target proteins such as AHP1. The thiocarboxylated form serves as substrate for conjugation and oxidative stress specifically induces the formation of UBL-protein conjugates. The protein is Ubiquitin-related modifier 1 of Yarrowia lipolytica (strain CLIB 122 / E 150) (Yeast).